The chain runs to 405 residues: Arginine biosynthesis bifunctional protein ArgJ (405 aa).

The substrate site is built by T152, K178, T189, E276, N400, and T405. T189 acts as the Nucleophile in catalysis.

It belongs to the ArgJ family. In terms of assembly, heterotetramer of two alpha and two beta chains.

The protein resides in the cytoplasm. The catalysed reaction is N(2)-acetyl-L-ornithine + L-glutamate = N-acetyl-L-glutamate + L-ornithine. It catalyses the reaction L-glutamate + acetyl-CoA = N-acetyl-L-glutamate + CoA + H(+). It participates in amino-acid biosynthesis; L-arginine biosynthesis; L-ornithine and N-acetyl-L-glutamate from L-glutamate and N(2)-acetyl-L-ornithine (cyclic): step 1/1. The protein operates within amino-acid biosynthesis; L-arginine biosynthesis; N(2)-acetyl-L-ornithine from L-glutamate: step 1/4. In terms of biological role, catalyzes two activities which are involved in the cyclic version of arginine biosynthesis: the synthesis of N-acetylglutamate from glutamate and acetyl-CoA as the acetyl donor, and of ornithine by transacetylation between N(2)-acetylornithine and glutamate. This chain is Arginine biosynthesis bifunctional protein ArgJ, found in Pseudomonas savastanoi pv. phaseolicola (strain 1448A / Race 6) (Pseudomonas syringae pv. phaseolicola (strain 1448A / Race 6)).